We begin with the raw amino-acid sequence, 448 residues long: Homogentisate 1,2-dioxygenase (448 aa).

Catalysis depends on H303, which acts as the Proton acceptor. Fe cation contacts are provided by H346 and E352. The homogentisate site is built by Y361 and H382. H382 contributes to the Fe cation binding site.

Belongs to the homogentisate dioxygenase family. In terms of assembly, hexamer; dimer of trimers. Fe cation serves as cofactor.

It carries out the reaction homogentisate + O2 = 4-maleylacetoacetate + H(+). Its pathway is amino-acid degradation; L-phenylalanine degradation; acetoacetate and fumarate from L-phenylalanine: step 4/6. Functionally, involved in the catabolism of homogentisate (2,5-dihydroxyphenylacetate or 2,5-OH-PhAc), a central intermediate in the degradation of phenylalanine and tyrosine. Catalyzes the oxidative ring cleavage of the aromatic ring of homogentisate to yield maleylacetoacetate. The chain is Homogentisate 1,2-dioxygenase from Rhodopseudomonas palustris (strain HaA2).